The following is a 134-amino-acid chain: Transcription antitermination protein NusB (134 aa).

Belongs to the NusB family.

In terms of biological role, involved in transcription antitermination. Required for transcription of ribosomal RNA (rRNA) genes. Binds specifically to the boxA antiterminator sequence of the ribosomal RNA (rrn) operons. The sequence is that of Transcription antitermination protein NusB from Shewanella sediminis (strain HAW-EB3).